The sequence spans 667 residues: Leucine aminopeptidase 2 (667 aa).

Residues 188–190 and 318–323 contribute to the a peptide site; these read QCQ and PYGGME. Histidine 347 is a binding site for Zn(2+). Glutamate 348 (proton acceptor) is an active-site residue. Residues histidine 351 and glutamate 370 each contribute to the Zn(2+) site. Tyrosine 436 serves as the catalytic Proton donor.

Belongs to the peptidase M1 family. It depends on Zn(2+) as a cofactor.

The protein localises to the cytoplasm. It localises to the nucleus. It catalyses the reaction an epoxide + H2O = an ethanediol. Functionally, aminopeptidase that preferentially cleaves di- and tripeptides. Also has low epoxide hydrolase activity (in vitro). Can hydrolyze the epoxide leukotriene LTA(4) but it forms preferentially 5,6-dihydroxy-7,9,11,14-eicosatetraenoic acid rather than the cytokine leukotriene B(4) as the product compared to the homologous mammalian enzyme (in vitro). This chain is Leucine aminopeptidase 2 (ara-1), found in Neurospora crassa (strain ATCC 24698 / 74-OR23-1A / CBS 708.71 / DSM 1257 / FGSC 987).